A 362-amino-acid chain; its full sequence is Ferrochelatase (362 aa).

2 residues coordinate Fe cation: His-228 and Glu-309.

It belongs to the ferrochelatase family.

Its subcellular location is the cytoplasm. The enzyme catalyses heme b + 2 H(+) = protoporphyrin IX + Fe(2+). The protein operates within porphyrin-containing compound metabolism; protoheme biosynthesis; protoheme from protoporphyrin-IX: step 1/1. Catalyzes the ferrous insertion into protoporphyrin IX. The protein is Ferrochelatase of Bordetella bronchiseptica (strain ATCC BAA-588 / NCTC 13252 / RB50) (Alcaligenes bronchisepticus).